The primary structure comprises 512 residues: FAD-dependent monooxygenase prx3 (512 aa).

Residues 1–19 (MLSLKAFLALSLSIHLSQG) form the signal peptide. Residues 63–235 (CQTTPTCVFA…TRFDLATFSV (173 aa)) form the FAD-binding PCMH-type domain. His-100 is subject to Pros-8alpha-FAD histidine. Asn-197, Asn-281, Asn-307, Asn-329, Asn-361, and Asn-477 each carry an N-linked (GlcNAc...) asparagine glycan.

This sequence belongs to the oxygen-dependent FAD-linked oxidoreductase family.

It functions in the pathway sesquiterpene biosynthesis. Its function is as follows. FAD-dependent monooxygenase; part of the gene cluster that mediates the biosynthesis of PR-toxin, a bicyclic sesquiterpene belonging to the eremophilane class and acting as a mycotoxin. The first step of the pathway is catalyzed by the aristolochene synthase which performs the cyclization of trans,trans-farnesyl diphosphate (FPP) to the bicyclic sesquiterpene aristolochene. Following the formation of aristolochene, the non-oxygenated aristolochene is converted to the trioxygenated intermediate eremofortin B, via 7-epi-neopetasone. This conversion appears to involve three enzymes, a hydroxysterol oxidase-like enzyme, the quinone-oxidase prx3 that forms the quinone-type-structure in the bicyclic nucleus of aristolochene with the C8-oxo group and the C-3 hydroxyl group, and the P450 monooxygenase ORF6 that introduces the epoxide at the double bond between carbons 1 and 2. No monoxy or dioxy-intermediates have been reported to be released to the broth, so these three early oxidative reactions may be coupled together. Eremofortin B is further oxidized by another P450 monooxygenase, that introduces a second epoxide between carbons 7 and 11 prior to acetylation to eremofortin A by the acetyltransferase ORF8. The second epoxidation may be performed by a second P450 monooxygenase. After the acetylation step, eremofortin A is converted to eremofortin C and then to PR-toxin. First the conversion of eremofortin A to eremofortin C proceeds by oxidation of the side chain of the molecule at C-12 and is catalyzed by the short-chain oxidoreductase prx1. The cytochrome P450 monooxygenase ORF6 is probably also involved in this step. The primary alcohol formed at C-12 is finally oxidized by the short-chain alcohol dehydrogenase prx4 that forms PR-toxin. In Penicillium roqueforti (strain FM164), this protein is FAD-dependent monooxygenase prx3.